A 137-amino-acid polypeptide reads, in one-letter code: Nucleoside diphosphate kinase (137 aa).

ATP is bound by residues Lys10, Phe58, Arg86, Thr92, Arg103, and Asn113. The Pros-phosphohistidine intermediate role is filled by His116.

Belongs to the NDK family. Homotetramer. Requires Mg(2+) as cofactor.

It is found in the cytoplasm. The enzyme catalyses a 2'-deoxyribonucleoside 5'-diphosphate + ATP = a 2'-deoxyribonucleoside 5'-triphosphate + ADP. The catalysed reaction is a ribonucleoside 5'-diphosphate + ATP = a ribonucleoside 5'-triphosphate + ADP. Its function is as follows. Major role in the synthesis of nucleoside triphosphates other than ATP. The ATP gamma phosphate is transferred to the NDP beta phosphate via a ping-pong mechanism, using a phosphorylated active-site intermediate. In Helicobacter pylori (strain Shi470), this protein is Nucleoside diphosphate kinase.